The following is a 115-amino-acid chain: Large ribosomal subunit protein bL19 (115 aa).

It belongs to the bacterial ribosomal protein bL19 family.

In terms of biological role, this protein is located at the 30S-50S ribosomal subunit interface and may play a role in the structure and function of the aminoacyl-tRNA binding site. This chain is Large ribosomal subunit protein bL19, found in Buchnera aphidicola subsp. Acyrthosiphon pisum (strain Tuc7).